Here is a 71-residue protein sequence, read N- to C-terminus: Light-harvesting protein B-800/850 alpha chain (71 aa).

Over 1-15 (MNQGKVWRVVKPTVG) the chain is Cytoplasmic. Residues 16–36 (VPVYLGAVAVTALILHGGLLA) form a helical membrane-spanning segment. H31 is a binding site for a bacteriochlorophyll. Residues 37–50 (KTDWFGAYWNGGKK) lie on the Periplasmic side of the membrane. The chain crosses the membrane as a helical span at residues 51–71 (AAAAAAAVAPAPVAAPQAPAQ).

The protein belongs to the antenna complex alpha subunit family. An alpha/beta heterodimer conjugated to 3 bacteriochlorophyll molecules. The core complex is formed by different alpha and beta chains, binding bacteriochlorophyll molecules, and arranged most probably in tetrameric structures disposed around the reaction center. The non-pigmented gamma chains may constitute additional components.

The protein resides in the cell membrane. Its function is as follows. Antenna complexes are light-harvesting systems, which transfer the excitation energy to the reaction centers. In Rubrivivax gelatinosus (Rhodocyclus gelatinosus), this protein is Light-harvesting protein B-800/850 alpha chain (pucA).